The sequence spans 281 residues: Homeobox protein Hox-A5 (281 aa).

Disordered stretches follow at residues 65 to 144 (VGNE…PCSS) and 162 to 183 (PLEE…SDST). Composition is skewed to polar residues over residues 68–99 (ERTQ…STGT) and 114–127 (VASS…QSQH). The segment covering 132–144 (NSITTPCSTPCSS) has biased composition (low complexity). Residues 172–183 (APTTPQNVSDST) are compositionally biased toward polar residues. An Antp-type hexapeptide motif is present at residues 187–192 (IYPWMR). A DNA-binding region (homeobox) is located at residues 205–264 (GKRARTAYTRYQTLELEKEFHFNRYLTRRRRIEIAHALCLSERQIKIWFQNRRMKWKKDN).

This sequence belongs to the Antp homeobox family.

The protein resides in the nucleus. Sequence-specific transcription factor which is part of a developmental regulatory system that provides cells with specific positional identities on the anterior-posterior axis. The polypeptide is Homeobox protein Hox-A5 (hoxa5) (Morone saxatilis (Striped bass)).